A 164-amino-acid chain; its full sequence is MVNPTVFFDIAVDGEPLGRVSFELFADKVPKTAENFRALSTGEKGFGYKGSCFHRIIPGFMCQGGDFTRHNGTGGKSIYGEKFDDENFILKHTGPGILSMANAGPNTNGSQFFICTVKTEWLDGKHVVFGKVKEGMNIVEAMERFGSRNGKTSKKITIADCGQL.

Residue Met-1 is modified to N-acetylmethionine. Val-2 carries the post-translational modification N-acetylvaline; in Peptidyl-prolyl cis-trans isomerase A, N-terminally processed. One can recognise a PPIase cyclophilin-type domain in the interval 7 to 163; sequence FFDIAVDGEP…KKITIADCGQ (157 aa). Lys-28 carries the N6-acetyllysine; alternate modification. Lys-28 is covalently cross-linked (Glycyl lysine isopeptide (Lys-Gly) (interchain with G-Cter in SUMO2); alternate). A Glycyl lysine isopeptide (Lys-Gly) (interchain with G-Cter in ubiquitin); alternate cross-link involves residue Lys-28. N6-acetyllysine occurs at positions 44 and 76. Residue Ser-77 is modified to Phosphoserine. Lys-82 bears the N6-acetyllysine; alternate mark. Lys-82 participates in a covalent cross-link: Glycyl lysine isopeptide (Lys-Gly) (interchain with G-Cter in SUMO2); alternate. A Phosphothreonine modification is found at Thr-93. A glycan (N-linked (GlcNAc...) asparagine) is linked at Asn-108. Lys-125, Lys-131, and Lys-133 each carry N6-acetyllysine.

It belongs to the cyclophilin-type PPIase family. PPIase A subfamily. Interacts with protein phosphatase PPP3CA/calcineurin A. Interacts with isoform 2 of BSG/CD147. Interacts with FOXO1; the interaction promotes FOXO1 dephosphorylation, nuclear accumulation and transcriptional activity. Interacts with integrin ITGA2B:ITGB3; the interaction is ROS and peptidyl-prolyl cis-trans isomerase (PPIase) activity-dependent and is increased in the presence of thrombin. Interacts with MAP3K5. Interacts with TARDBP; the interaction is dependent on the RNA-binding activity of TARDBP and the PPIase activity of PPIA/CYPA and the acetylation of PPIA/CYPA at Lys-125 favors the interaction. Interacts with HNRNPA1, HNRNPA2B1, HNRNPC, RBMX, HNRNPK and HNRNPM. Acetylation at Lys-125 markedly inhibits catalysis of cis to trans isomerization. PPIA acetylation also antagonizes the immunosuppressive effects of cyclosporine by inhibiting the sequential steps of cyclosporine binding and calcineurin inhibition. Acetylation at Lys-125 favors the interaction with TARDBP.

It is found in the cytoplasm. The protein localises to the secreted. The protein resides in the nucleus. The enzyme catalyses [protein]-peptidylproline (omega=180) = [protein]-peptidylproline (omega=0). Binds cyclosporin A (CsA). CsA mediates some of its effects via an inhibitory action on PPIase. Catalyzes the cis-trans isomerization of proline imidic peptide bonds in oligopeptides. Exerts a strong chemotactic effect on leukocytes partly through activation of one of its membrane receptors BSG/CD147, initiating a signaling cascade that culminates in MAPK/ERK activation. Activates endothelial cells (ECs) in a proinflammatory manner by stimulating activation of NF-kappa-B and ERK, JNK and p38 MAP-kinases and by inducing expression of adhesion molecules including SELE and VCAM1. Induces apoptosis in ECs by promoting the FOXO1-dependent expression of CCL2 and BCL2L11 which are involved in EC chemotaxis and apoptosis. In response to oxidative stress, initiates proapoptotic and antiapoptotic signaling in ECs via activation of NF-kappa-B and AKT1 and up-regulation of antiapoptotic protein BCL2. Negatively regulates MAP3K5/ASK1 kinase activity, autophosphorylation and oxidative stress-induced apoptosis mediated by MAP3K5/ASK1. Necessary for the assembly of TARDBP in heterogeneous nuclear ribonucleoprotein (hnRNP) complexes and regulates TARDBP binding to RNA UG repeats and TARDBP-dependent expression of HDAC6, ATG7 and VCP which are involved in clearance of protein aggregates. Plays an important role in platelet activation and aggregation. Regulates calcium mobilization and integrin ITGA2B:ITGB3 bidirectional signaling via increased ROS production as well as by facilitating the interaction between integrin and the cell cytoskeleton. Binds heparan sulfate glycosaminoglycans. The protein is Peptidyl-prolyl cis-trans isomerase A (PPIA) of Saguinus oedipus (Cotton-top tamarin).